The primary structure comprises 656 residues: UvrABC system protein B (656 aa).

Positions 23-180 (EGIKKGYRFQ…QHLAKIGYER (158 aa)) constitute a Helicase ATP-binding domain. Residue 36–43 (GVTGSGKT) coordinates ATP. The short motif at 89 to 112 (YYDYYQPEAYVPTKDLYIEKNADI) is the Beta-hairpin element. The Helicase C-terminal domain occupies 426 to 588 (QVDDLISEIK…ITPKTIVKPL (163 aa)). Residues 614 to 649 (EEYLSLLEEEMYRAASELRYEDAAKLRDEIFRLREE) form the UVR domain.

The protein belongs to the UvrB family. In terms of assembly, forms a heterotetramer with UvrA during the search for lesions. Interacts with UvrC in an incision complex.

The protein resides in the cytoplasm. The UvrABC repair system catalyzes the recognition and processing of DNA lesions. A damage recognition complex composed of 2 UvrA and 2 UvrB subunits scans DNA for abnormalities. Upon binding of the UvrA(2)B(2) complex to a putative damaged site, the DNA wraps around one UvrB monomer. DNA wrap is dependent on ATP binding by UvrB and probably causes local melting of the DNA helix, facilitating insertion of UvrB beta-hairpin between the DNA strands. Then UvrB probes one DNA strand for the presence of a lesion. If a lesion is found the UvrA subunits dissociate and the UvrB-DNA preincision complex is formed. This complex is subsequently bound by UvrC and the second UvrB is released. If no lesion is found, the DNA wraps around the other UvrB subunit that will check the other stand for damage. In Pseudothermotoga lettingae (strain ATCC BAA-301 / DSM 14385 / NBRC 107922 / TMO) (Thermotoga lettingae), this protein is UvrABC system protein B.